Reading from the N-terminus, the 1391-residue chain is DNA-directed RNA polymerase subunit beta'' (1391 aa).

Zn(2+)-binding residues include Cys-224, Cys-295, Cys-302, and Cys-305.

The protein belongs to the RNA polymerase beta' chain family. RpoC2 subfamily. In terms of assembly, in plastids the minimal PEP RNA polymerase catalytic core is composed of four subunits: alpha, beta, beta', and beta''. When a (nuclear-encoded) sigma factor is associated with the core the holoenzyme is formed, which can initiate transcription. Requires Zn(2+) as cofactor.

The protein localises to the plastid. It localises to the chloroplast. It catalyses the reaction RNA(n) + a ribonucleoside 5'-triphosphate = RNA(n+1) + diphosphate. In terms of biological role, DNA-dependent RNA polymerase catalyzes the transcription of DNA into RNA using the four ribonucleoside triphosphates as substrates. The protein is DNA-directed RNA polymerase subunit beta'' of Buxus microphylla (Littleleaf boxwood).